Reading from the N-terminus, the 327-residue chain is Olfactory receptor 51T1 (327 aa).

The Extracellular portion of the chain corresponds to 1-27 (MAIFNNTTSSSSNFLLTAFPGLECAHV). Residues asparagine 5 and asparagine 6 are each glycosylated (N-linked (GlcNAc...) asparagine). Residues 28-48 (WISIPVCCLYTIALLGNSMIF) traverse the membrane as a helical segment. Over 49–56 (LVIITKRR) the chain is Cytoplasmic. Residues 57-77 (LHKPMYYFLSMLAAVDLCLTI) traverse the membrane as a helical segment. Over 78–101 (TTLPTVLGVLWFHAREISFKACFI) the chain is Extracellular. A helical transmembrane segment spans residues 102–122 (QMFFVHAFSLLESSVLVAMAF). The Cytoplasmic segment spans residues 123 to 141 (DRFVAICNPLNYATILTDR). A helical transmembrane segment spans residues 142 to 162 (MVLVIGLVICIRPAVFLLPLL). Residues 163 to 198 (VAINTVSFHGGHELSHPFCYHPEVIKYTYSKPWISS) lie on the Extracellular side of the membrane. The chain crosses the membrane as a helical span at residues 199-219 (FWGLFLQLYLNGTDVLFILFS). Topologically, residues 220–239 (YVLILRTVLGIVARKKQQKA) are cytoplasmic. The helical transmembrane segment at 240–260 (LSTCVCHICAVTIFYVPLISL) threads the bilayer. The Extracellular segment spans residues 261 to 275 (SLAHRLFHSTPRVLC). The chain crosses the membrane as a helical span at residues 276–296 (STLANIYLLLPPVLNPIIYSL). Residues 297–327 (KTKTIRQAMFQLLQSKGSWGFNVRGLRGRWD) lie on the Cytoplasmic side of the membrane.

This sequence belongs to the G-protein coupled receptor 1 family.

It is found in the cell membrane. Odorant receptor. The polypeptide is Olfactory receptor 51T1 (OR51T1) (Homo sapiens (Human)).